The following is a 113-amino-acid chain: Pancreatic progenitor cell differentiation and proliferation factor B (113 aa).

It belongs to the PPDPF family.

Functionally, probable regulator of exocrine pancreas development. The chain is Pancreatic progenitor cell differentiation and proliferation factor B (ppdpf-b) from Xenopus laevis (African clawed frog).